A 524-amino-acid polypeptide reads, in one-letter code: Sexual development regulator velC (524 aa).

4 disordered regions span residues N114–S195, P322–Y349, V380–R413, and G503–E524. Polar residues-rich tracts occupy residues T131 to G153 and L178 to S195. A Velvet domain is found at S248–R500. A compositionally biased stretch (polar residues) spans P393–D402.

It belongs to the velvet family. VelC subfamily. As to quaternary structure, interacts with vosA.

It is found in the nucleus. Velvet-domain-containing protein that acts as a positive regulator of sexual development. Positively regulates the production of the sexual fruiting bodies called cleistothecia. The chain is Sexual development regulator velC from Emericella nidulans (strain FGSC A4 / ATCC 38163 / CBS 112.46 / NRRL 194 / M139) (Aspergillus nidulans).